A 124-amino-acid polypeptide reads, in one-letter code: Small ribosomal subunit protein uS13 (124 aa).

Residues 95-124 are disordered; sequence GLPVRGQRTKTNARTRKGPKRTIAGKKKAR.

This sequence belongs to the universal ribosomal protein uS13 family. As to quaternary structure, part of the 30S ribosomal subunit. Forms a loose heterodimer with protein S19. Forms two bridges to the 50S subunit in the 70S ribosome.

Functionally, located at the top of the head of the 30S subunit, it contacts several helices of the 16S rRNA. In the 70S ribosome it contacts the 23S rRNA (bridge B1a) and protein L5 of the 50S subunit (bridge B1b), connecting the 2 subunits; these bridges are implicated in subunit movement. Contacts the tRNAs in the A and P-sites. The chain is Small ribosomal subunit protein uS13 from Mycobacterium avium (strain 104).